The following is a 302-amino-acid chain: MVSSTAGYRSSALGKLKAFISLTKPRQLALLMLTMYGAYFAGGGSLDPRMLALLTIMGFTSIGGVTAFNMYFDRDIDAIMGRTRRRPLPSGVLNPYEALAGSLALVIAGVLSAAAINTYVALTVIAGLYFDIIAYTQLTKRFTPLSIIFGSIAGSMPALGGWAAAAGSITTGGVLMALIVFLWQPMHVWFLGYYFKEEYSVARIPILPSNGNPRLVSSLIAVSLAGLIAVAWAFALYYGYGFLTAVITTVLAALAISRIGGFARTGERREALKLFKFASPIIAVVFIILPLERTLVYTLLLG.

The next 9 membrane-spanning stretches (helical) occupy residues 28-48 (LALL…SLDP), 50-70 (MLAL…AFNM), 93-115 (LNPY…SAAA), 119-138 (YVAL…YTQL), 147-167 (IIFG…AAAG), 172-192 (GGVL…WFLG), 219-239 (LIAV…LYYG), 242-262 (FLTA…IGGF), and 271-291 (ALKL…ILPL).

Belongs to the UbiA prenyltransferase family. Protoheme IX farnesyltransferase subfamily.

Its subcellular location is the cell membrane. It catalyses the reaction heme b + (2E,6E)-farnesyl diphosphate + H2O = Fe(II)-heme o + diphosphate. It participates in porphyrin-containing compound metabolism; heme O biosynthesis; heme O from protoheme: step 1/1. Functionally, converts heme B (protoheme IX) to heme O by substitution of the vinyl group on carbon 2 of heme B porphyrin ring with a hydroxyethyl farnesyl side group. The protein is Protoheme IX farnesyltransferase of Aeropyrum pernix (strain ATCC 700893 / DSM 11879 / JCM 9820 / NBRC 100138 / K1).